The primary structure comprises 291 residues: Quinol oxidase subunit 2 (291 aa).

The first 28 residues, 1-28 (MQLKKAFWKLASLLPXSLLLFLGGCDKK), serve as a signal peptide directing secretion. 2 helical membrane-spanning segments follow: residues 49 to 69 (SFLL…VILI) and 91 to 111 (LEII…IPTV).

This sequence belongs to the cytochrome c oxidase subunit 2 family.

The protein localises to the cell membrane. It carries out the reaction 2 a quinol + O2 = 2 a quinone + 2 H2O. In terms of biological role, catalyzes quinol oxidation with the concomitant reduction of oxygen to water. Subunit II transfers the electrons from a quinol to the binuclear center of the catalytic subunit I. This Bacillus cereus (strain ATCC 10987 / NRS 248) protein is Quinol oxidase subunit 2.